Reading from the N-terminus, the 87-residue chain is U3-theraphotoxin-Hhn1a 16 (87 aa).

The N-terminal stretch at 1–24 (MVNMKASMFLTFAGLVLLFVVCYA) is a signal peptide. A propeptide spanning residues 25–52 (SESEEKEFPKEMLSSIFAVDNDFKQGER) is cleaved from the precursor. Disulfide bonds link C54/C67, C61/C72, and C66/C79.

It belongs to the neurotoxin 10 (Hwtx-1) family. 51 (Hntx-8) subfamily. Hntx-8 sub-subfamily. In terms of tissue distribution, expressed by the venom gland.

Its subcellular location is the secreted. Ion channel inhibitor. The protein is U3-theraphotoxin-Hhn1a 16 of Cyriopagopus hainanus (Chinese bird spider).